A 471-amino-acid chain; its full sequence is Extracellular endo-alpha-(1-&gt;5)-L-arabinanase (471 aa).

A signal peptide spans 1 to 19; the sequence is MRFLFLMITLTALTGYILA. The active-site Proton acceptor is Asp32. Residues Asp32, Gly117, 167–170, 187–189, and 219–223 contribute to the substrate site; these read NALD, SWF, and HSSME. Catalysis depends on Glu223, which acts as the Proton donor. His314 contacts Ca(2+).

It belongs to the glycosyl hydrolase 43 family. Monomer. Requires Ca(2+) as cofactor.

It is found in the secreted. It catalyses the reaction Endohydrolysis of (1-&gt;5)-alpha-arabinofuranosidic linkages in (1-&gt;5)-arabinans.. It functions in the pathway glycan metabolism; L-arabinan degradation. Functionally, involved in the degradation of arabinan and is a key enzyme in the complete degradation of the plant cell wall. Catalyzes the internal cleavage of alpha-(1-&gt;5)-L-arabinofuranosyl residues in different arabinan-containing polysaccharides, and releases arabinotriose and arabinobiose as end products. It acts on branched arabinan (from sugar beet), but more slowly when compared to linear or debranched arabinan. The sequence is that of Extracellular endo-alpha-(1-&gt;5)-L-arabinanase from Thermotoga petrophila (strain ATCC BAA-488 / DSM 13995 / JCM 10881 / RKU-1).